Reading from the N-terminus, the 252-residue chain is 5'-nucleotidase SurE (252 aa).

A divalent metal cation-binding residues include Asp-8, Asp-9, Ser-39, and Asn-95.

Belongs to the SurE nucleotidase family. The cofactor is a divalent metal cation.

Its subcellular location is the cytoplasm. It catalyses the reaction a ribonucleoside 5'-phosphate + H2O = a ribonucleoside + phosphate. Functionally, nucleotidase that shows phosphatase activity on nucleoside 5'-monophosphates. The polypeptide is 5'-nucleotidase SurE (Clostridium botulinum (strain Loch Maree / Type A3)).